A 92-amino-acid polypeptide reads, in one-letter code: Small ribosomal subunit protein uS19 (92 aa).

It belongs to the universal ribosomal protein uS19 family.

Functionally, protein S19 forms a complex with S13 that binds strongly to the 16S ribosomal RNA. This is Small ribosomal subunit protein uS19 (rpsS) from Synechocystis sp. (strain ATCC 27184 / PCC 6803 / Kazusa).